A 404-amino-acid polypeptide reads, in one-letter code: Multidrug resistance protein MdtG (404 aa).

Transmembrane regions (helical) follow at residues 19 to 39 (LGCF…PLYV), 56 to 76 (LVFS…GGLA), 90 to 110 (LGMA…QFLI), 113 to 133 (ALLG…ATQA), 144 to 164 (TLST…GLLA), 171 to 191 (PVFF…FFFI), 222 to 242 (LFVT…ILTL), 254 to 274 (IAFI…LSAP), 288 to 308 (ILIV…FVQT), 317 to 337 (FLLG…LVYN), and 376 to 396 (AVFC…WNSL).

The protein belongs to the major facilitator superfamily. DHA1 family. MdtG (TC 2.A.1.2.20) subfamily.

The protein resides in the cell inner membrane. The protein is Multidrug resistance protein MdtG of Salmonella paratyphi A (strain ATCC 9150 / SARB42).